Reading from the N-terminus, the 757-residue chain is MSLLFSRCNSIVTVKKNKRHMAEVNASPLKHFVTAKKKINGIFEQLGAYIQESATFLEDTYRNAELDPVTTEEQVLDVKGYLSKVRGISEVLARRHMKVAFFGRTSNGKSTVINAMLWDKVLPSGIGHTTNCFLRVEGTDGHEAFLLTEGSEEKRSAKTVNQLAHALHQDKQLHAGSLVSVMWPNSKCPLLKDDLVLMDSPGIDVTTELDSWIDKFCLDADVFVLVANSESTLMQTEKHFFHKVSERLSRPNIFILNNRWDASASEPEYMEEVRRQHMERCTSFLVDELGVVDRSQAGDRIFFVSAKEVLNARIQKAQGMPEGGGALAEGFQVRMFEFQNFERRFEECISQSAVKTKFEQHTVRAKQIAEAVRLIMDSLHMAAREQQVYCEEMREERQDRLKFIDKQLELLAQDYKLRIKQITEEVERQVSTAMAEEIRRLSVLVDDYQMDFHPSPVVLKVYKNELHRHIEEGLGRNMSDRCSTAITNSLQTMQQDMIDGLKPLLPVSVRSQIDMLVPRQCFSLNYDLNCDKLCADFQEDIEFHFSLGWTMLVNRFLGPKNSRRALMGYNDQVQRPIPLTPANPSMPPLPQGSLTQEEFMVSMVTGLASLTSRTSMGILVVGGVVWKAVGWRLIALSFGLYGLLYVYERLTWTTKAKERAFKRQFVEHASEKLQLVISYTGSNCSHQVQQELSGTFAHLCQQVDVTRENLEQEIAAMNKKIEVLDSLQSKAKLLRNKAGWLDSELNMFTHQYLQPSR.

At 1-604 (MSLLFSRCNS…TQEEFMVSMV (604 aa)) the chain is on the cytoplasmic side. Positions 30 to 94 (KHFVTAKKKI…VRGISEVLAR (65 aa)) are part of a helix bundle domain, formed by helices from N-terminal and C-terminal regions. Residues 93–342 (ARRHMKVAFF…VRMFEFQNFE (250 aa)) form the Dynamin-type G domain. The segment at 103–110 (GRTSNGKS) is G1 motif. 106-111 (SNGKST) lines the GTP pocket. At threonine 111 the chain carries Phosphothreonine; by PINK1. A G2 motif region spans residues 129–130 (TT). The segment at 199-202 (DSPG) is G3 motif. Residue 258–261 (NRWD) coordinates GTP. The segment at 258–261 (NRWD) is G4 motif. Position 288 (glutamate 288) is a region of interest, G5 motif. GTP-binding residues include serine 305 and lysine 307. A part of a helix bundle domain, formed by helices from N-terminal and C-terminal regions region spans residues 359-385 (EQHTVRAKQIAEAVRLIMDSLHMAARE). The stretch at 391-434 (EEMREERQDRLKFIDKQLELLAQDYKLRIKQITEEVERQVSTAM) forms a coiled coil. Serine 442 is modified (phosphoserine; by PINK1). A helical transmembrane segment spans residues 605 to 625 (TGLASLTSRTSMGILVVGGVV). Tryptophan 626 is a topological domain (mitochondrial intermembrane). The chain crosses the membrane as a helical span at residues 627-647 (KAVGWRLIALSFGLYGLLYVY). The Cytoplasmic segment spans residues 648–757 (ERLTWTTKAK…FTHQYLQPSR (110 aa)). Residues 695–738 (TFAHLCQQVDVTRENLEQEIAAMNKKIEVLDSLQSKAKLLRNKA) are a coiled coil. Positions 722 to 753 (EVLDSLQSKAKLLRNKAGWLDSELNMFTHQYL) are part of a helix bundle domain, formed by helices from N-terminal and C-terminal regions.

It belongs to the TRAFAC class dynamin-like GTPase superfamily. Dynamin/Fzo/YdjA family. Mitofusin subfamily. Forms homomultimers and heteromultimers with MFN1. Oligomerization is essential for mitochondrion fusion. Interacts with VAT1. Interacts with STOML2; may form heterooligomers. Interacts (phosphorylated) with PRKN. Interacts with EIF2AK3. Interacts with THG1L; THG1L probably functions as a guanyl-nucleotide exchange factor/GEF, activating MFN2. In terms of processing, phosphorylated by PINK1. Post-translationally, ubiquitinated by non-degradative ubiquitin by PRKN, promoting mitochondrial fusion; deubiquitination by USP30 inhibits mitochondrial fusion. Ubiquitinated by HUWE1 when dietary stearate (C18:0) levels are low; ubiquitination inhibits mitochondrial fusion. As to expression, ubiquitous; expressed at low level. Highly expressed in heart and kidney.

The protein localises to the mitochondrion outer membrane. The catalysed reaction is GTP + H2O = GDP + phosphate + H(+). Functionally, mitochondrial outer membrane GTPase that mediates mitochondrial clustering and fusion. Mitochondria are highly dynamic organelles, and their morphology is determined by the equilibrium between mitochondrial fusion and fission events. Overexpression induces the formation of mitochondrial networks. Membrane clustering requires GTPase activity and may involve a major rearrangement of the coiled coil domains. Plays a central role in mitochondrial metabolism and may be associated with obesity and/or apoptosis processes. Plays an important role in the regulation of vascular smooth muscle cell proliferation. Involved in the clearance of damaged mitochondria via selective autophagy (mitophagy). Is required for PRKN recruitment to dysfunctional mitochondria. Involved in the control of unfolded protein response (UPR) upon ER stress including activation of apoptosis and autophagy during ER stress. Acts as an upstream regulator of EIF2AK3 and suppresses EIF2AK3 activation under basal conditions. In Homo sapiens (Human), this protein is Mitofusin-2.